A 2327-amino-acid chain; its full sequence is Chondroitin sulfate proteoglycan 4 (2327 aa).

The first 29 residues, 1–29, serve as a signal peptide directing secretion; sequence MLLGPGHPLSAPALALALTLALLVRSTAP. Laminin G-like domains are found at residues 30-193 and 203-381; these read ASFF…HEGC and VGLG…SAGC. The interval 30–640 is globular or compact configuration stabilized by disulfide bonds; that stretch reads ASFFGENHLE…HRGGPAQDLT (611 aa). A neurite growth inhibition region spans residues 30–640; it reads ASFFGENHLE…HRGGPAQDLT (611 aa). The Extracellular segment spans residues 30–2229; that stretch reads ASFFGENHLE…LGFLEANMFS (2200 aa). An N-linked (GlcNAc...) asparagine glycan is attached at Asn-130. A disulfide bridge links Cys-170 with Cys-193. N-linked (GlcNAc...) asparagine glycosylation occurs at Asn-349. A disulfide bridge links Cys-355 with Cys-381. N-linked (GlcNAc...) asparagine glycosylation occurs at Asn-428. 3 CSPG repeats span residues 429–524, 554–646, and 663–765; these read FTQL…LEVS, PRII…VSDG, and AIQI…LEVQ. Residues 575–1045 form an interaction with COL6A2 region; it reads GPEIFQAYDP…RGGQRLLTTD (471 aa). Positions 632 to 1451 are interaction with COL5A1; the sequence is RGGPAQDLTF…SETQTDAFVL (820 aa). Residues Asn-686 and Asn-773 are each glycosylated (N-linked (GlcNAc...) asparagine). 2 CSPG repeats span residues 784–883 and 903–994; these read TVWM…FRVT and NAPV…FVAT. Ser-1000 carries O-linked (Xyl...) (chondroitin sulfate) serine glycosylation. 9 CSPG repeats span residues 1023-1115, 1131-1221, 1243-1342, 1361-1454, 1478-1568, 1586-1684, 1709-1808, 1837-1929, and 1946-2034; these read APVQ…VSDG, YLHV…FSVA, PLQL…LDVA, TVIP…LLAN, PPVL…LSDG, LLSL…LLLS, PSRL…FRAH, PPQP…MSDG, and TIEV…VVAL. N-linked (GlcNAc...) asparagine glycosylation is found at Asn-1136 and Asn-1207. N-linked (GlcNAc...) asparagine glycosylation is found at Asn-1369 and Asn-1454. Residues 1591–2226 are neurite growth inhibition; sequence GTRKLTVCPE…GGFLGFLEAN (636 aa). The segment at 1592–2226 is cysteine-containing; sequence TRKLTVCPES…GGFLGFLEAN (635 aa). Asn-1650 carries N-linked (GlcNAc...) asparagine glycosylation. N-linked (GlcNAc...) asparagine glycosylation is found at Asn-1914, Asn-2021, Asn-2039, Asn-2045, and Asn-2080. A CSPG 15 repeat occupies 2043 to 2152; the sequence is TVNVTVQALL…AGDRLTLELW (110 aa). Positions 2190 to 2210 are disordered; it reads ETEKPGRSVPTGQPGQAASSP. Residues 2199–2210 show a composition bias toward polar residues; the sequence is PTGQPGQAASSP. Residues 2230 to 2250 form a helical membrane-spanning segment; the sequence is IIIPVCLILLLLALILPLLFY. At 2251-2327 the chain is on the cytoplasmic side; that stretch reads LRKRNKTGKH…PALRNGQYWV (77 aa). Thr-2257 is subject to Phosphothreonine; by PKC/PRKCA. The short motif at 2325–2327 is the PDZ-binding element; it reads YWV.

In terms of assembly, interacts with ITGA4 through its chondroitin sulfate glycosaminoglycan. Interacts with BCAR1, CDC42 and ACK1. Interacts with MMP16. Interacts with the first PDZ domain of MPDZ. Interacts with PRKCA. Interacts with LGALS3 and the integrin composed of ITGB1 and ITGA3. Binds TNC, laminin-1, COL5A1 and COL6A2. Interacts with PLG and angiostatin. Binds FGF2 and PDGFA. Interacts with GRIP1, GRIP2 and GRIA2. Forms a ternary complex with GRIP1 and GRIA2. Post-translationally, O-glycosylated; contains glycosaminoglycan chondroitin sulfate which are required for proper localization and function in stress fiber formation. Involved in interaction with MMP16 and ITGA4. In terms of processing, phosphorylation by PRKCA regulates its subcellular location and function in cell motility. In terms of tissue distribution, expressed in microcascular pericytes and not endothelial cells.

Its subcellular location is the cell membrane. It localises to the apical cell membrane. It is found in the cell projection. The protein resides in the lamellipodium membrane. The protein localises to the cell surface. Its function is as follows. Proteoglycan playing a role in cell proliferation and migration which stimulates endothelial cells motility during microvascular morphogenesis. May also inhibit neurite outgrowth and growth cone collapse during axon regeneration. Cell surface receptor for collagen alpha 2(VI) which may confer cells ability to migrate on that substrate. Binds through its extracellular N-terminus growth factors, extracellular matrix proteases modulating their activity. May regulate MPP16-dependent degradation and invasion of type I collagen participating in melanoma cells invasion properties. May modulate the plasminogen system by enhancing plasminogen activation and inhibiting angiostatin. Also functions as a signal transducing protein by binding through its cytoplasmic C-terminus scaffolding and signaling proteins. May promote retraction fiber formation and cell polarization through Rho GTPase activation. May stimulate alpha-4, beta-1 integrin-mediated adhesion and spreading by recruiting and activating a signaling cascade through CDC42, ACK1 and BCAR1. May activate FAK and ERK1/ERK2 signaling cascades. This chain is Chondroitin sulfate proteoglycan 4 (Cspg4), found in Mus musculus (Mouse).